A 307-amino-acid chain; its full sequence is Oligopeptide transport ATP-binding protein OppF (307 aa).

One can recognise an ABC transporter domain in the interval 6-251 (VEVKDLEISF…PIHPYTQSLL (246 aa)). Residue 42-49 (GESGSGKT) participates in ATP binding.

The protein belongs to the ABC transporter superfamily. As to quaternary structure, the complex is composed of two ATP-binding proteins (OppD and OppF), two transmembrane proteins (OppB and OppC) and a solute-binding protein (OppA).

It localises to the cell membrane. The enzyme catalyses a [peptide](out) + ATP + H2O = a [peptide](in) + ADP + phosphate + H(+). Part of the ABC transporter complex OppABCDF involved in the uptake of oligopeptides. Probably responsible for energy coupling to the transport system. The chain is Oligopeptide transport ATP-binding protein OppF (oppF) from Streptococcus pyogenes serotype M1.